The chain runs to 139 residues: ATP synthase epsilon chain (139 aa).

Belongs to the ATPase epsilon chain family. F-type ATPases have 2 components, CF(1) - the catalytic core - and CF(0) - the membrane proton channel. CF(1) has five subunits: alpha(3), beta(3), gamma(1), delta(1), epsilon(1). CF(0) has three main subunits: a, b and c.

The protein localises to the cell membrane. Its function is as follows. Produces ATP from ADP in the presence of a proton gradient across the membrane. The chain is ATP synthase epsilon chain from Streptococcus sanguinis.